A 72-amino-acid polypeptide reads, in one-letter code: Cytochrome b-c1 complex subunit 9 (72 aa).

The Mitochondrial matrix portion of the chain corresponds to 1-27 (MESAARRSGGGVLEGFYRLVMRRTPVY). The helical transmembrane segment at 28–53 (VTFVIAGALLGERAVDYGVKTLWEKN) threads the bilayer. Residues 54–72 (NVGKRYEDISVLGQRPVDE) lie on the Mitochondrial intermembrane side of the membrane.

Belongs to the UQCR10/QCR9 family. As to quaternary structure, component of the ubiquinol-cytochrome c oxidoreductase (cytochrome b-c1 complex, complex III, CIII), a multisubunit enzyme composed of 3 respiratory subunits cytochrome b, cytochrome c1 and Rieske protein, 2 core protein subunits, and additional low-molecular weight protein subunits. The complex exists as an obligatory dimer and forms supercomplexes (SCs) in the inner mitochondrial membrane with cytochrome c oxidase (complex IV, CIV).

The protein localises to the mitochondrion inner membrane. Functionally, component of the ubiquinol-cytochrome c oxidoreductase, a multisubunit transmembrane complex that is part of the mitochondrial electron transport chain which drives oxidative phosphorylation. The respiratory chain contains 3 multisubunit complexes succinate dehydrogenase (complex II, CII), ubiquinol-cytochrome c oxidoreductase (cytochrome b-c1 complex, complex III, CIII) and cytochrome c oxidase (complex IV, CIV), that cooperate to transfer electrons derived from NADH and succinate to molecular oxygen, creating an electrochemical gradient over the inner membrane that drives transmembrane transport and the ATP synthase. The cytochrome b-c1 complex catalyzes electron transfer from ubiquinol to cytochrome c, linking this redox reaction to translocation of protons across the mitochondrial inner membrane, with protons being carried across the membrane as hydrogens on the quinol. In the process called Q cycle, 2 protons are consumed from the matrix, 4 protons are released into the intermembrane space and 2 electrons are passed to cytochrome c. This chain is Cytochrome b-c1 complex subunit 9, found in Solanum tuberosum (Potato).